We begin with the raw amino-acid sequence, 228 residues long: HTH-type transcriptional regulator ArcR (228 aa).

22–141 (SYINIPVGVL…VKLFSLLSET (120 aa)) provides a ligand contact to a nucleoside 3',5'-cyclic phosphate. Positions 155–228 (KLAKERVTKI…SKNWLVSKDL (74 aa)) constitute an HTH crp-type domain. Residues 188–207 (IQLLSDMAGISRETTSHIIN) constitute a DNA-binding region (H-T-H motif).

It is found in the cytoplasm. Functionally, positively regulates the expression of the arcABDCR operon under anaerobic conditions, thus playing an essential role in arginine catabolism. May also control the expression of genes encoding proteins which are involved in anaerobic metabolism. Can bind cyclic AMP. The protein is HTH-type transcriptional regulator ArcR (arcR) of Staphylococcus epidermidis (strain ATCC 35984 / DSM 28319 / BCRC 17069 / CCUG 31568 / BM 3577 / RP62A).